Reading from the N-terminus, the 369-residue chain is Signal recognition particle receptor FtsY (369 aa).

Over residues Gly-20–Thr-42 the composition is skewed to basic and acidic residues. The tract at residues Gly-20–Ile-58 is disordered. A compositionally biased stretch (low complexity) spans Gln-44–Gln-53. GTP contacts are provided by residues Gly-180 to Thr-187, Asp-262 to Arg-266, and Thr-320 to Asp-323.

The protein belongs to the GTP-binding SRP family. FtsY subfamily. In terms of assembly, part of the signal recognition particle protein translocation system, which is composed of SRP and FtsY.

Its subcellular location is the cell membrane. It localises to the cytoplasm. The enzyme catalyses GTP + H2O = GDP + phosphate + H(+). Involved in targeting and insertion of nascent membrane proteins into the cytoplasmic membrane. Acts as a receptor for the complex formed by the signal recognition particle (SRP) and the ribosome-nascent chain (RNC). The sequence is that of Signal recognition particle receptor FtsY from Sulfolobus acidocaldarius (strain ATCC 33909 / DSM 639 / JCM 8929 / NBRC 15157 / NCIMB 11770).